A 225-amino-acid polypeptide reads, in one-letter code: MKKNVTELYKTIDYIFADQGLLEQAMTHRSHKGQHNERLEFLGDSILSFVIANALYAKFPKAREGDLSRMRSTLVRGQTLAEFGLEFGLGDYLRLGPGELKSGGFRRESTLADAVEAIIGAVFLDSDIERCGELILSWYEERLNAISPGLNQKDPKTLLQEHLQARKLSLPGYTVVDTKGQAHNQTFTVECIVDGMDSIISVGSSRRKAEQKAAEKALKILKNEP.

In terms of domain architecture, RNase III spans V5 to D127. Position 40 (E40) interacts with Mg(2+). The active site involves D44. D113 and E116 together coordinate Mg(2+). The active site involves E116. The DRBM domain maps to D154–N223.

Belongs to the ribonuclease III family. Homodimer. Mg(2+) serves as cofactor.

Its subcellular location is the cytoplasm. The enzyme catalyses Endonucleolytic cleavage to 5'-phosphomonoester.. Digests double-stranded RNA. Involved in the processing of primary rRNA transcript to yield the immediate precursors to the large and small rRNAs (23S and 16S). Processes some mRNAs, and tRNAs when they are encoded in the rRNA operon. Processes pre-crRNA and tracrRNA of type II CRISPR loci if present in the organism. In Pseudoalteromonas translucida (strain TAC 125), this protein is Ribonuclease 3.